Here is a 461-residue protein sequence, read N- to C-terminus: Protein naked cuticle homolog 2 (461 aa).

The segment at 1 to 106 (MGKFQSKHAA…DGEKAASREG (106 aa)) is disordered. Residue glycine 2 is the site of N-myristoyl glycine attachment. 2 stretches are compositionally biased toward basic and acidic residues: residues 34–73 (RGAE…DKGS) and 97–106 (DGEKAASREG). The segment at 121–186 (QCDVSVEEDN…LRVKLTVSPE (66 aa)) is interaction with DVL1, DVL2 and DVL3. An EF-hand domain is found at 127-162 (EEDNRQEWTFTLYDFDNSGKVTREDMSSLMHTIYEV). Residues aspartate 140, aspartate 142, serine 144, lysine 146, and aspartate 151 each coordinate Ca(2+). Disordered stretches follow at residues 176 to 205 (TLRV…PTRG), 263 to 302 (YTSK…HAIH), 321 to 359 (TRAL…PGKA), 372 to 414 (SAQD…GQPT), and 441 to 461 (HEHH…FHPS). Positions 188–205 (SSKKECPLTGQDREPTRG) are enriched in basic and acidic residues. The interval 307-396 (QVLAEHVIPA…PPQPYGHKRY (90 aa)) is interaction with TGFA. The segment covering 341–350 (PKGPGKPLGT) has biased composition (low complexity). The span at 380 to 390 (PQPPPQPPPQP) shows a compositional bias: pro residues.

It belongs to the NKD family. As to quaternary structure, interacts with RNF25, TGFA (via cytoplasmic domain), and PPP2R3A. Interacts with DVL1, DVL2 and DVL3. Post-translationally, ubiquitinated, leading to rapid proteasomal degradation. Interaction with TGFA interferes with RNF25 binding and protects against ubiquitination mediated by RNF25. In terms of tissue distribution, expressed in the cecum, colon, esophagus, ileum, jejunum, skin and stomach.

It localises to the cell membrane. The protein localises to the cytoplasm. Its subcellular location is the cytoplasmic vesicle. Functionally, cell autonomous antagonist of the canonical Wnt signaling pathway. May activate a second Wnt signaling pathway that controls planar cell polarity. Required for processing of TGFA and for targeting of TGFA to the basolateral membrane of polarized epithelial cells. In Mus musculus (Mouse), this protein is Protein naked cuticle homolog 2 (Nkd2).